The chain runs to 117 residues: Gamma-aminobutyric acid receptor-associated protein-like 2 (117 aa).

At Lys-24 the chain carries N6-acetyllysine. Residues Ser-39, Ser-87, and Ser-88 each carry the phosphoserine modification. Gly-116 is lipidated: Phosphatidylethanolamine amidated glycine; alternate. A lipid anchor (Phosphatidylserine amidated glycine; alternate) is attached at Gly-116. Phe-117 is a propeptide (removed in mature form).

Belongs to the ATG8 family. In terms of assembly, monomer. Interacts with ATG3, ATG7, ATG13 and ULK1. Interacts with TP53INP1 and TP53INP2. Interacts with TBC1D25. Directly interacts with SQSTM1 and BNIP3. Interacts with TECPR2 and PCM1. Interacts with TBC1D5. Interacts with TRIM5. Interacts with MEFV and TRIM21. Interacts with WDFY3. Interacts with UBA5; promoting recruitment of UBA5 to the endoplasmic reticulum membrane. Interacts with GOSR1. Interacts with KBTBD6 and KBTBD7; the interaction is direct. Interacts with reticulophagy regulators RETREG1, RETREG2 and RETREG3. Interacts with IRGM. Interacts with DNM2. Interacts with NCOA4. Interacts with IRGQ. Post-translationally, the precursor molecule is cleaved by ATG4 (ATG4A, ATG4B, ATG4C or ATG4D) to expose the glycine at the C-terminus and form the cytosolic form, GABARAPL2-I. The processed form is then activated by APG7L/ATG7, transferred to ATG3 and conjugated to phosphatidylethanolamine (PE) phospholipid to form the membrane-bound form, GABARAPL2-II. During non-canonical autophagy, the processed form is conjugated to phosphatidylserine (PS) phospholipid. ATG4 proteins also mediate the delipidation of PE-conjugated forms required for GABARAPL2 recycling when autophagosomes fuse with lysosomes. In addition, ATG4B and ATG4D mediate delipidation of ATG8 proteins conjugated to PS during non-canonical autophagy. ATG4B constitutes the major protein for proteolytic activation. ATG4D is the main enzyme for delipidation activity. Phosphorylation at Ser-87 and Ser-88 by TBK1 prevents interaction with ATG4 (ATG4A, ATG4B, ATG4C or ATG4D). Phosphorylation by TBK1 on autophagosomes prevents their delipidation by ATG4 and premature removal from nascent autophagosomes. Ubiquitous. Expressed at high levels in the brain, heart, prostate, ovary, spleen and skeletal muscle. Expressed at very low levels in lung, thymus and small intestine.

It localises to the cytoplasmic vesicle. The protein localises to the autophagosome. The protein resides in the endoplasmic reticulum membrane. It is found in the golgi apparatus. In terms of biological role, ubiquitin-like modifier involved in intra-Golgi traffic. Modulates intra-Golgi transport through coupling between NSF activity and SNAREs activation. It first stimulates the ATPase activity of NSF which in turn stimulates the association with GOSR1. Involved in autophagy. Plays a role in mitophagy which contributes to regulate mitochondrial quantity and quality by eliminating the mitochondria to a basal level to fulfill cellular energy requirements and preventing excess ROS production. Whereas LC3s are involved in elongation of the phagophore membrane, the GABARAP/GATE-16 subfamily is essential for a later stage in autophagosome maturation. The protein is Gamma-aminobutyric acid receptor-associated protein-like 2 of Bos taurus (Bovine).